Consider the following 139-residue polypeptide: MCFATRRWFYLHLGCMMLINLVNADFEFQKGVLASISPGITKDIDLQCWKACSLTLIDLKELKIEHNVDAFWNFMLFLQKSQRPGHYNVFLNIAQDFWDMYVDCLLSRSHGMGRRQVMPPKYNFPQKITGGNLNVYLRE.

Positions 1–24 (MCFATRRWFYLHLGCMMLINLVNA) are cleaved as a signal peptide. Position 112 is a methionine amide (Met112). Positions 113–139 (GRRQVMPPKYNFPQKITGGNLNVYLRE) are cleaved as a propeptide — removed in the mature form.

Post-translationally, the active form requires C-terminal amidation and disulfide bond formation.

The protein localises to the secreted. May be capable of activating GPR83 via the GNAQ signaling pathway. The sequence is that of Protein FAM237B from Homo sapiens (Human).